The following is a 728-amino-acid chain: Beta-porphyranase A (728 aa).

The N-terminal stretch at 1–22 is a signal peptide; that stretch reads MSYKYIFLLSAFTLGVPPGIYC. Residues His53, Lys76, Trp78, Lys87, His114, and Asn151 each contribute to the substrate site. Residue Glu152 is the Proton donor of the active site. The substrate site is built by His235, Glu279, Ser326, and Trp331. The active-site Nucleophile is Glu279. Residues 599–701 form the CBM-cenC domain; it reads TLQNGTFSEG…AVSFDFNSTV (103 aa).

The protein belongs to the glycosyl hydrolase 86 family.

It carries out the reaction Hydrolysis of beta-D-galactopyranose-(1-&gt;4)-alpha-L-galactopyranose-6-sulfate linkages in porphyran.. Functionally, cleaves the sulfated polysaccharide porphyran at the (1-&gt;4) linkages between beta-D-galactopyranose and alpha-L-galactopyranose-6-sulfate, forming mostly the disaccharide alpha-L-galactopyranose-6-sulfate-(1-&gt;3)-beta-D-galactose. Some longer oligosaccharides of even number of residues are also observed. Inactive on the non-sulfated agarose portion of the porphyran backbone. Can also use methylated galactoses. This is Beta-porphyranase A from Phocaeicola plebeius (strain DSM 17135 / JCM 12973 / CCUG 54634 / M2) (Bacteroides plebeius).